A 223-amino-acid chain; its full sequence is Deoxyribose-phosphate aldolase 2 (223 aa).

Asp89 acts as the Proton donor/acceptor in catalysis. Lys152 functions as the Schiff-base intermediate with acetaldehyde in the catalytic mechanism. Lys181 (proton donor/acceptor) is an active-site residue.

This sequence belongs to the DeoC/FbaB aldolase family. DeoC type 1 subfamily.

It is found in the cytoplasm. It catalyses the reaction 2-deoxy-D-ribose 5-phosphate = D-glyceraldehyde 3-phosphate + acetaldehyde. It participates in carbohydrate degradation; 2-deoxy-D-ribose 1-phosphate degradation; D-glyceraldehyde 3-phosphate and acetaldehyde from 2-deoxy-alpha-D-ribose 1-phosphate: step 2/2. Its function is as follows. Catalyzes a reversible aldol reaction between acetaldehyde and D-glyceraldehyde 3-phosphate to generate 2-deoxy-D-ribose 5-phosphate. This is Deoxyribose-phosphate aldolase 2 from Bacillus licheniformis (strain ATCC 14580 / DSM 13 / JCM 2505 / CCUG 7422 / NBRC 12200 / NCIMB 9375 / NCTC 10341 / NRRL NRS-1264 / Gibson 46).